A 530-amino-acid polypeptide reads, in one-letter code: Calnexin homolog 1 (530 aa).

An N-terminal signal peptide occupies residues 1 to 20; that stretch reads MRQRQLFSVFLLLLAFVSFQ. Topologically, residues 21–466 are lumenal; the sequence is KLCYCDDQTV…EKAEQQPNLT (446 aa). 2 residues coordinate Ca(2+): serine 34 and aspartate 65. A disulfide bond links cysteine 108 and cysteine 143. Residues tyrosine 112, lysine 114, tyrosine 134, and aspartate 141 each contribute to the an alpha-D-glucoside site. Positions 216–315 are disordered; sequence ALIPAKTIPD…KCEAAPGCGE (100 aa). Residues 223–356 form a p domain (Extended arm) region; the sequence is IPDPEDKKPE…RDIPNPDYFE (134 aa). Positions 224–240 are enriched in basic and acidic residues; that stretch reads PDPEDKKPEDWDERAKI. 5 tandem repeats follow at residues 225–236, 242–253, 261–272, 280–291, and 295–305. 4 X approximate repeats regions lie at residues 225-291 and 295-352; these read DPED…DWDD and GMWE…IPNP. A compositionally biased stretch (acidic residues) spans 250–281; sequence DWDEDAPMEIEDEEAEKPEGWLDDEPEEVDDP. Cysteine 307 and cysteine 313 are disulfide-bonded. 3 tandem repeats follow at residues 314 to 324, 328 to 338, and 342 to 352. Glutamate 371 serves as a coordination point for an alpha-D-glucoside. Aspartate 382 serves as a coordination point for Ca(2+). An N-linked (GlcNAc...) asparagine glycan is attached at asparagine 464. Residues 467–487 form a helical membrane-spanning segment; the sequence is IGVLVAIVVVFFSLFLKLIFG. The Cytoplasmic segment spans residues 488 to 530; it reads GKKAAAPVEKKKPEVAESSKSGDEAEKKEETAAPRKRQPRRDN. A disordered region spans residues 490 to 530; the sequence is KAAAPVEKKKPEVAESSKSGDEAEKKEETAAPRKRQPRRDN. Residues 495-520 are compositionally biased toward basic and acidic residues; sequence VEKKKPEVAESSKSGDEAEKKEETAA. Residue serine 508 is modified to Phosphoserine. Residues 521–530 show a composition bias toward basic residues; it reads PRKRQPRRDN.

It belongs to the calreticulin family.

It localises to the endoplasmic reticulum membrane. Calcium-binding protein that interacts with newly synthesized monoglucosylated glycoproteins in the endoplasmic reticulum. It may act in assisting protein assembly and/or in the retention within the ER of unassembled protein subunits. It seems to play a major role in the quality control apparatus of the ER by the retention of incorrectly folded proteins. The chain is Calnexin homolog 1 (CNX1) from Arabidopsis thaliana (Mouse-ear cress).